The following is a 123-amino-acid chain: Large ribosomal subunit protein uL14 (123 aa).

The protein belongs to the universal ribosomal protein uL14 family. Part of the 50S ribosomal subunit. Forms a cluster with proteins L3 and L19. In the 70S ribosome, L14 and L19 interact and together make contacts with the 16S rRNA in bridges B5 and B8.

Binds to 23S rRNA. Forms part of two intersubunit bridges in the 70S ribosome. The protein is Large ribosomal subunit protein uL14 of Vibrio vulnificus (strain CMCP6).